Reading from the N-terminus, the 1580-residue chain is Adhesion G protein-coupled receptor L3 (1580 aa).

The signal sequence occupies residues Met1 to Gly19. Over Gly20–Thr949 the chain is Extracellular. The tract at residues Ser23–Ala81 is disordered. The SUEL-type lectin domain maps to Ser103 to Val192. Intrachain disulfides connect Cys104–Cys134, Cys113–Cys191, Cys146–Cys178, Cys159–Cys165, and Cys203–Cys385. A glycan (N-linked (GlcNAc...) asparagine) is linked at Asn161. One can recognise an Olfactomedin-like domain in the interval Leu202–Pro461. Positions Tyr317–Glu347 are interaction with FLRT3. The Ca(2+) site is built by Asp332, Asn380, Ala381, and Val435. Residues Glu494–Pro540 form a disordered region. Positions Ser496–Arg521 are enriched in low complexity. A compositionally biased stretch (polar residues) spans Ser522–Ser539. Residues Asn532, Asn617, Asn827, Asn840, Asn885, and Asn911 are each glycosylated (N-linked (GlcNAc...) asparagine). A GAIN-B domain is found at Asp756–Lys935. 2 disulfide bridges follow: Cys886/Cys917 and Cys905/Cys919. Residues Cys886–Lys935 form a GPS region. The stachel stretch occupies residues Thr923 to Ala939. A helical transmembrane segment spans residues Trp950 to Phe970. Over Arg971 to Asn978 the chain is Cytoplasmic. Residues Thr979–Ile999 traverse the membrane as a helical segment. N-linked (GlcNAc...) asparagine glycosylation is present at Asn1000. At Asn1000–Ala1007 the chain is on the extracellular side. The chain crosses the membrane as a helical span at residues Cys1008–Leu1028. Residues Glu1029 to Tyr1050 are Cytoplasmic-facing. The helical transmembrane segment at Phe1051 to Tyr1071 threads the bilayer. Residues Arg1072–Phe1088 are Extracellular-facing. A helical membrane pass occupies residues Ile1089–Ile1109. Residues Ala1110–Ser1142 lie on the Cytoplasmic side of the membrane. The helical transmembrane segment at Trp1143–Met1163 threads the bilayer. Residues Tyr1164–Thr1169 are Extracellular-facing. Asn1166 carries N-linked (GlcNAc...) asparagine glycosylation. A helical membrane pass occupies residues Val1170–Phe1190. Topologically, residues His1191–Leu1580 are cytoplasmic. Positions Gly1213–Ser1238 are disordered. Ser1254 carries the phosphoserine modification. The interval Phe1555 to Leu1580 is disordered. Residues His1575–Leu1580 carry the PDZ-binding motif.

Belongs to the G-protein coupled receptor 2 family. LN-TM7 subfamily. Heterodimer of 2 chains generated by proteolytic processing; the large extracellular N-terminal fragment and the membrane-bound C-terminal fragment predominantly remain associated and non-covalently linked. Interacts (via olfactomedin-like domain) with FLRT1 (via extracellular domain). Interacts (via olfactomedin-like domain) with FLRT2 (via extracellular domain). Interacts (via olfactomedin-like domain) with FLRT3 (via extracellular domain); the interaction is direct. Interacts (via extracellular domain) with TENM1. Interacts (via extracellular domain) with TENM2. Interacts (via extracellular domain) with TENM3. Identified in a complex with FLRT3 and UNC5B; does not interact with UNC5B by itself. Identified in a complex with FLRT3 and UNC5D; does not interact with UNC5D by itself. In terms of assembly, interacts (via PDZ-binding motif) with SHANK3. Interacts (via PDZ-binding motif) with DLG4. Post-translationally, autoproteolytically processed at the GPS region of the GAIN-B domain; this cleavage modulates receptor activity. In terms of tissue distribution, brain-specific distribution but low levels are also detected in lung and spleen.

It localises to the cell membrane. The protein localises to the postsynaptic cell membrane. The protein resides in the cell projection. Its subcellular location is the axon. It is found in the cell junction. Forms a heterodimer of 2 chains generated by proteolytic processing that remain associated through non-covalent interactions mediated by the GAIN-B domain. In the inactivated receptor, the Stachel sequence (also named stalk) is embedded in the GAIN-B domain, where it adopts a beta-strand conformation. On activation, the Stachel moves into the 7 transmembrane region and adopts a twisted hook-shaped configuration that forms contacts within the receptor, leading to coupling of a G-alpha protein, which activates signaling. The cleaved GAIN-B and N-terminal domains can then dissociate from the rest of the receptor. Functionally, orphan adhesion G-protein coupled receptor (aGPCR), which mediates synapse specificity. Ligand binding causes a conformation change that triggers signaling via guanine nucleotide-binding proteins (G proteins) and modulates the activity of downstream effectors. ADGRL3 is coupled with different classes of G alpha proteins, such as G(12)/G(13), G(s), G(i) or G(q), depending on the context. Coupling to G(12)/G(13) G proteins, which mediates the activation Rho small GTPases is the most efficient. Following G-protein coupled receptor activation, associates with cell adhesion molecules that are expressed at the surface of adjacent cells to direct synapse specificity. Specifically mediates the establishment of Schaffer-collateral synapses formed by CA3-region axons on CA1-region pyramidal neurons in the hippocampus. Localizes to postsynaptic spines in excitatory synapses in the S.oriens and S.radiatum and interacts with presynaptic cell adhesion molecules FLRT3 and TENM2, promoting synapse formation. Plays a role in the development of glutamatergic synapses in the cortex. Important in determining the connectivity rates between the principal neurons in the cortex. Orphan adhesion G-protein coupled receptor (aGPCR), which mediates synapse specificity. Ligand binding causes a conformation change that triggers signaling via guanine nucleotide-binding proteins (G proteins) and modulates the activity of downstream effectors, such as adenylate cyclase. Isoform 1 is specifically coupled to G(s) G proteins and mediates activation of adenylate cyclase activity. Following G-protein coupled receptor activation, undergoes liquid-liquid phase transition, associates with (1) cell adhesion molecules that are expressed at the surface of adjacent cells, as well as (2) PDZ-containing proteins, such as SHANK3 and DLG4, in the cytoplasm to direct synapse formation. In Bos taurus (Bovine), this protein is Adhesion G protein-coupled receptor L3.